A 359-amino-acid chain; its full sequence is Aminomethyltransferase (359 aa).

This sequence belongs to the GcvT family. As to quaternary structure, the glycine cleavage system is composed of four proteins: P, T, L and H.

It catalyses the reaction N(6)-[(R)-S(8)-aminomethyldihydrolipoyl]-L-lysyl-[protein] + (6S)-5,6,7,8-tetrahydrofolate = N(6)-[(R)-dihydrolipoyl]-L-lysyl-[protein] + (6R)-5,10-methylene-5,6,7,8-tetrahydrofolate + NH4(+). In terms of biological role, the glycine cleavage system catalyzes the degradation of glycine. The chain is Aminomethyltransferase from Alcanivorax borkumensis (strain ATCC 700651 / DSM 11573 / NCIMB 13689 / SK2).